A 559-amino-acid polypeptide reads, in one-letter code: Sulfite reductase [NADPH] hemoprotein beta-component (559 aa).

Residues cysteine 423, cysteine 429, cysteine 468, and cysteine 472 each coordinate [4Fe-4S] cluster. Cysteine 472 contributes to the siroheme binding site.

Belongs to the nitrite and sulfite reductase 4Fe-4S domain family. As to quaternary structure, alpha(8)-beta(8). The alpha component is a flavoprotein, the beta component is a hemoprotein. Requires siroheme as cofactor. [4Fe-4S] cluster serves as cofactor.

It catalyses the reaction hydrogen sulfide + 3 NADP(+) + 3 H2O = sulfite + 3 NADPH + 4 H(+). Its pathway is sulfur metabolism; hydrogen sulfide biosynthesis; hydrogen sulfide from sulfite (NADPH route): step 1/1. Its function is as follows. Component of the sulfite reductase complex that catalyzes the 6-electron reduction of sulfite to sulfide. This is one of several activities required for the biosynthesis of L-cysteine from sulfate. The polypeptide is Sulfite reductase [NADPH] hemoprotein beta-component (Thiocapsa roseopersicina).